A 444-amino-acid polypeptide reads, in one-letter code: UDP-N-acetylmuramoylalanine--D-glutamate ligase (444 aa).

Position 118 to 124 (118 to 124) interacts with ATP; it reads GTNGKTT.

The protein belongs to the MurCDEF family.

It localises to the cytoplasm. The catalysed reaction is UDP-N-acetyl-alpha-D-muramoyl-L-alanine + D-glutamate + ATP = UDP-N-acetyl-alpha-D-muramoyl-L-alanyl-D-glutamate + ADP + phosphate + H(+). The protein operates within cell wall biogenesis; peptidoglycan biosynthesis. Cell wall formation. Catalyzes the addition of glutamate to the nucleotide precursor UDP-N-acetylmuramoyl-L-alanine (UMA). The protein is UDP-N-acetylmuramoylalanine--D-glutamate ligase of Protochlamydia amoebophila (strain UWE25).